A 423-amino-acid polypeptide reads, in one-letter code: Putative competence-damage inducible protein (423 aa).

This sequence belongs to the CinA family.

The chain is Putative competence-damage inducible protein from Streptococcus pyogenes serotype M12 (strain MGAS2096).